The chain runs to 59 residues: U-myrmeciitoxin(01)-Mg5b (59 aa).

The signal sequence occupies residues 1 to 21 (MRLSYLSLALAIIFVLTIMHA). Residues 22–38 (SNVEAKASADPEPDAVG) constitute a propeptide that is removed on maturation.

In terms of tissue distribution, expressed by the venom gland.

It localises to the secreted. In terms of biological role, may have antimicrobial properties, like most ant linear peptides. This is U-myrmeciitoxin(01)-Mg5b from Myrmecia gulosa (Red bulldog ant).